A 515-amino-acid polypeptide reads, in one-letter code: Phospholipase A1-Igamma1, chloroplastic (515 aa).

A chloroplast-targeting transit peptide spans 1–44; it reads MATIPSHNLRPHTTNQRTQYSLSFRPHFSRSTLITFPARSSPAR. The short motif at 301–305 is the GXSXG element; that stretch reads GHSLG. Ser303 acts as the Acyl-ester intermediate in catalysis. Residues Asp366 and His422 each act as charge relay system in the active site.

The protein belongs to the AB hydrolase superfamily. Lipase family. Ubiquitous. Highly expressed in leaves.

The protein localises to the plastid. It is found in the chloroplast. It carries out the reaction 1,2-dihexadecanoyl-sn-glycero-3-phosphocholine + H2O = 2-hexadecanoyl-sn-glycero-3-phosphocholine + hexadecanoate + H(+). The catalysed reaction is a 1,2-diacyl-3-O-(beta-D-galactosyl)-sn-glycerol + H2O = an acyl-3-O-(beta-D-galactosyl)-sn-glycerol + a fatty acid + H(+). It catalyses the reaction a 1,2-diacyl-3-O-[alpha-D-galactosyl-(1-&gt;6)-beta-D-galactosyl]-sn-glycerol + H2O = acyl-3-O-[alpha-D-galactosyl-(1-&gt;6)-beta-D-galactosyl]-sn-glycerol + a fatty acid + H(+). Its function is as follows. Acylhydrolase with a broad specificity. Catalyzes the hydrolysis of phosphatidylcholine at the sn-1 position. Moderate activity toward phosphatidylcholine (PC), monogalactosyldiacylglycerol (MGDG), digalactosyldiacylglycerol (DGDG) and triacylglycerol (TAG). May display dual sn-1/sn-2 substrate specificity. Could be involved in early wound response. In Arabidopsis thaliana (Mouse-ear cress), this protein is Phospholipase A1-Igamma1, chloroplastic.